The primary structure comprises 330 residues: Aspartate--ammonia ligase (330 aa).

It belongs to the class-II aminoacyl-tRNA synthetase family. AsnA subfamily.

The protein resides in the cytoplasm. The catalysed reaction is L-aspartate + NH4(+) + ATP = L-asparagine + AMP + diphosphate + H(+). It participates in amino-acid biosynthesis; L-asparagine biosynthesis; L-asparagine from L-aspartate (ammonia route): step 1/1. This chain is Aspartate--ammonia ligase, found in Actinobacillus succinogenes (strain ATCC 55618 / DSM 22257 / CCUG 43843 / 130Z).